The sequence spans 347 residues: NADH-ubiquinone oxidoreductase chain 2 (347 aa).

11 helical membrane-spanning segments follow: residues 3 to 23 (PIIF…VMIS), 25 to 45 (HWLR…PIMM), 66 to 86 (ASML…QWTV), 96 to 116 (MLMT…FWVP), 122 to 142 (IPLS…MSVL), 145 to 165 (ILPS…IMIG), 178 to 198 (IMAY…PYNP), 200 to 220 (MMLL…LLFM), 237 to 257 (MPIM…LPPL), 274 to 294 (NSII…YFYM), and 325 to 345 (LLPT…ILSI).

Belongs to the complex I subunit 2 family. As to quaternary structure, core subunit of respiratory chain NADH dehydrogenase (Complex I) which is composed of 45 different subunits. Interacts with TMEM242.

Its subcellular location is the mitochondrion inner membrane. The enzyme catalyses a ubiquinone + NADH + 5 H(+)(in) = a ubiquinol + NAD(+) + 4 H(+)(out). Its function is as follows. Core subunit of the mitochondrial membrane respiratory chain NADH dehydrogenase (Complex I) which catalyzes electron transfer from NADH through the respiratory chain, using ubiquinone as an electron acceptor. Essential for the catalytic activity and assembly of complex I. This Capra hircus (Goat) protein is NADH-ubiquinone oxidoreductase chain 2.